Reading from the N-terminus, the 779-residue chain is LPS-assembly protein LptD (779 aa).

A signal peptide spans 1–23 (MKIRYSVLSTFIISALYSQDTQA).

The protein belongs to the LptD family. Component of the lipopolysaccharide transport and assembly complex. Interacts with LptE and LptA.

It localises to the cell outer membrane. Together with LptE, is involved in the assembly of lipopolysaccharide (LPS) at the surface of the outer membrane. The chain is LPS-assembly protein LptD from Haemophilus ducreyi (strain 35000HP / ATCC 700724).